Reading from the N-terminus, the 370-residue chain is Protein Mut11 (370 aa).

Residues 1–22 form a disordered region; the sequence is MARGPGDTDMDEASADAAIPSS. 7 WD repeats span residues 38–77, 80–119, 122–162, 165–204, 208–247, 262–301, and 329–370; these read GHTKAVAAVKFSPDGSLLASGSADRTVALWDAATGARVNT, GHSCGVSDVAWNPNGRYLATAADDHSLKLWDAETGACLRT, GHTN…CLRE, AHSDPVTSAAFSYDGSMVVTSSLDGLIRLWDTQTGHCLKT, RDSPPVSFAAFTPNAKYVLCNTLDGRAKLWDYAAGRTRRT, GFLGGSSSASFDLGCSMVVTGSEDGSLAAYDISTGHVVGR, and GHTA…PAAA.

Belongs to the WD repeat WDR5/wds family.

The protein resides in the nucleus. Part of a complex involved in 'Lys-4' histone H3 methylation. The sequence is that of Protein Mut11 (Mut11) from Chlamydomonas reinhardtii (Chlamydomonas smithii).